Reading from the N-terminus, the 305-residue chain is uncharacterized protein (305 aa).

Residues 53–185 (SGRIGDGDDG…TGPRSSRTVG (133 aa)) form a disordered region. Composition is skewed to basic and acidic residues over residues 95 to 116 (VEER…ERPT) and 128 to 142 (GSER…RSEG). The segment covering 161–171 (GNTQAPSQSAE) has biased composition (polar residues). The RING-type; atypical zinc finger occupies 260–302 (CAICMSNFIKNQRLRVLPCDHRFHVGCVDKWLLGHSNKCPVCR).

This is an uncharacterized protein from Encephalitozoon cuniculi (strain GB-M1) (Microsporidian parasite).